We begin with the raw amino-acid sequence, 893 residues long: Desmocollin-1 (893 aa).

The first 29 residues, 1–29, serve as a signal peptide directing secretion; that stretch reads MAVASAAPGSIFWKQLLFSLLVLILFCDA. Residues 30–132 constitute a propeptide that is removed on maturation; it reads CQKISLQVPS…KDAVLRRTKR (103 aa). Cadherin domains follow at residues 133–240, 241–352, 353–470, 471–574, and 575–682; these read RWAP…APYF, ENKL…APYF, TETS…GPEC, QPPV…DHPP, and QIKQ…LSRE. Residues 133 to 692 lie on the Extracellular side of the membrane; sequence RWAPIPCSLM…AALANVFLGK (560 aa). N-linked (GlcNAc...) asparagine glycosylation is present at N163. The residue at position 383 (T383) is a Phosphothreonine. N-linked (GlcNAc...) asparagine glycosylation is found at N398 and N545. A helical transmembrane segment spans residues 693–715; it reads WAILAMVLGSVLLLCILFTCFCV. Over 716–893 the chain is Cytoplasmic; the sequence is TVKKTVKKCF…RTLAKTCVKK (178 aa).

As to quaternary structure, binds to JUP/plakoglobin. Post-translationally, isoform 1A is phosphorylated on a serine but isoform 1B is not. Epidermis and weakly in tongue papillae.

It localises to the cell membrane. Its subcellular location is the cell junction. It is found in the desmosome. In terms of biological role, a component of desmosome cell-cell junctions which are required for positive regulation of cellular adhesion. Required for desmosome adhesion strength between the granular layers of the epidermis, as a result moderates epidermal proliferation and differentiation. Is therefore required to maintain postnatal epidermal barrier function and normal hair follicle morphology into adulthood. This is Desmocollin-1 (DSC1) from Bos taurus (Bovine).